The chain runs to 473 residues: Photosystem II CP43 reaction center protein (473 aa).

A propeptide spanning residues 1–14 (MKTLYSLRRFYPVE) is cleaved from the precursor. T15 carries the N-acetylthreonine modification. Residue T15 is modified to Phosphothreonine. The next 5 helical transmembrane spans lie at 69–93 (LFEV…PHLA), 134–155 (LLGP…KDRN), 178–200 (KALY…RKIT), 255–275 (KPFA…LSYS), and 291–312 (WFNN…ASQA). [CaMn4O5] cluster is bound at residue E367. Residues 447-471 (RARAAAAGFEKGIDRDFEPVLSMTP) traverse the membrane as a helical segment.

Belongs to the PsbB/PsbC family. PsbC subfamily. As to quaternary structure, PSII is composed of 1 copy each of membrane proteins PsbA, PsbB, PsbC, PsbD, PsbE, PsbF, PsbH, PsbI, PsbJ, PsbK, PsbL, PsbM, PsbT, PsbX, PsbY, PsbZ, Psb30/Ycf12, at least 3 peripheral proteins of the oxygen-evolving complex and a large number of cofactors. It forms dimeric complexes. Binds multiple chlorophylls and provides some of the ligands for the Ca-4Mn-5O cluster of the oxygen-evolving complex. It may also provide a ligand for a Cl- that is required for oxygen evolution. PSII binds additional chlorophylls, carotenoids and specific lipids. serves as cofactor.

The protein resides in the plastid. It is found in the chloroplast thylakoid membrane. One of the components of the core complex of photosystem II (PSII). It binds chlorophyll and helps catalyze the primary light-induced photochemical processes of PSII. PSII is a light-driven water:plastoquinone oxidoreductase, using light energy to abstract electrons from H(2)O, generating O(2) and a proton gradient subsequently used for ATP formation. The sequence is that of Photosystem II CP43 reaction center protein from Buxus microphylla (Littleleaf boxwood).